A 323-amino-acid chain; its full sequence is Glyoxylate/hydroxypyruvate reductase B (323 aa).

Residues arginine 237 and glutamate 266 contribute to the active site. Residue histidine 285 is the Proton donor of the active site.

The protein belongs to the D-isomer specific 2-hydroxyacid dehydrogenase family. GhrB subfamily. In terms of assembly, homodimer.

It is found in the cytoplasm. The catalysed reaction is glycolate + NADP(+) = glyoxylate + NADPH + H(+). The enzyme catalyses (R)-glycerate + NAD(+) = 3-hydroxypyruvate + NADH + H(+). It catalyses the reaction (R)-glycerate + NADP(+) = 3-hydroxypyruvate + NADPH + H(+). Catalyzes the NADPH-dependent reduction of glyoxylate and hydroxypyruvate into glycolate and glycerate, respectively. The sequence is that of Glyoxylate/hydroxypyruvate reductase B from Klebsiella pneumoniae (strain 342).